A 210-amino-acid polypeptide reads, in one-letter code: Guanylate kinase (210 aa).

Residues 6–186 (GLLGIISAPS…ALIYLQSVIL (181 aa)) enclose the Guanylate kinase-like domain. 13 to 20 (APSGAGKS) contributes to the ATP binding site.

It belongs to the guanylate kinase family.

Its subcellular location is the cytoplasm. It carries out the reaction GMP + ATP = GDP + ADP. Essential for recycling GMP and indirectly, cGMP. The polypeptide is Guanylate kinase (Blochmanniella floridana).